The following is a 139-amino-acid chain: Diuretic hormone 41 (139 aa).

An N-terminal signal peptide occupies residues 1–20 (MMWWALWCAVVVAAGSGVAA). A propeptide spanning residues 21–79 (APAPDSLSPLDMVQMDSSAPDDETLYAMSPMAARYSAGAPWLYLLADMPRDSQTGSGRV) is cleaved from the precursor. Isoleucine 122 is modified (isoleucine amide).

Belongs to the sauvagine/corticotropin-releasing factor/urotensin I family. Expressed in corpora cardiaca (CC), corpora allata (CA), antennal lobe (AL) and gnathal ganglion (GNG) (at protein level). Expression in CC and CA detected in all animals, in GNG in most animals, expression in AL detected in few animals (at protein level).

It is found in the secreted. Functionally, regulation of fluid secretion. This chain is Diuretic hormone 41, found in Agrotis ipsilon (Black cutworm moth).